The chain runs to 514 residues: Na(+)/H(+) antiporter NhaB (514 aa).

Helical transmembrane passes span 23–43, 63–83, 97–117, 120–140, 144–164, 202–222, 238–258, 303–323, 357–377, 391–411, 447–467, and 475–495; these read LALLVFLIVNPFIFLANPFIA, PLLPGGLLAIEAVIIGMTSAA, LLLMFMVAGIYFMKQLLLFIF, LLLSIRSKMVLSLAFCVAAAF, FLDALTVVAVVISVAVGFYGI, LMMHAGVGTALGGVMTMVGEP, FFLRMSPVTVPVLVCGLLTCM, AVIGVWLVTALALHLAEVGLI, LTVFFSIVAVIIDQHLFAPII, LFYLFNGLLSSISDNVFVGTI, ATPNGQAAFLFLLTSALAPLI, and VWMALPYTIVLTLIGLLCVEF.

It belongs to the NhaB Na(+)/H(+) (TC 2.A.34) antiporter family.

The protein resides in the cell inner membrane. It carries out the reaction 2 Na(+)(in) + 3 H(+)(out) = 2 Na(+)(out) + 3 H(+)(in). Na(+)/H(+) antiporter that extrudes sodium in exchange for external protons. The sequence is that of Na(+)/H(+) antiporter NhaB from Salmonella gallinarum (strain 287/91 / NCTC 13346).